Reading from the N-terminus, the 473-residue chain is 3-isopropylmalate dehydratase large subunit (473 aa).

The [4Fe-4S] cluster site is built by cysteine 351, cysteine 414, and cysteine 417.

This sequence belongs to the aconitase/IPM isomerase family. LeuC type 1 subfamily. Heterodimer of LeuC and LeuD. [4Fe-4S] cluster is required as a cofactor.

It catalyses the reaction (2R,3S)-3-isopropylmalate = (2S)-2-isopropylmalate. The protein operates within amino-acid biosynthesis; L-leucine biosynthesis; L-leucine from 3-methyl-2-oxobutanoate: step 2/4. In terms of biological role, catalyzes the isomerization between 2-isopropylmalate and 3-isopropylmalate, via the formation of 2-isopropylmaleate. In Acidovorax ebreus (strain TPSY) (Diaphorobacter sp. (strain TPSY)), this protein is 3-isopropylmalate dehydratase large subunit.